Consider the following 258-residue polypeptide: MQENLKNDKLKIGKYEFDSRFILGSGKYSLELIKSAIEEAKTQIITLALRRANTGEIANILDYIPKNITLLPNTSGARNADEALRIARLSRELGCGELIKIEVISDSRYLLPDNYETIKACELLAKEGFTPLPYMHADLYAARAMRDAGAAAIMPLAAPIGSNKGLCAKEFIQILLNEIDLPIIVDAGIGSPSQACEAMQMGVSAVMVNTAIAEAKDVALMAKAFSLAVNAGRAAFLAGLASVSKAKASSPLTGFLRD.

The active-site Schiff-base intermediate with DXP is lysine 100. 1-deoxy-D-xylulose 5-phosphate-binding positions include glycine 161, 187-188, and 209-210; these read AG and NT.

The protein belongs to the ThiG family. Homotetramer. Forms heterodimers with either ThiH or ThiS.

It localises to the cytoplasm. It carries out the reaction [ThiS sulfur-carrier protein]-C-terminal-Gly-aminoethanethioate + 2-iminoacetate + 1-deoxy-D-xylulose 5-phosphate = [ThiS sulfur-carrier protein]-C-terminal Gly-Gly + 2-[(2R,5Z)-2-carboxy-4-methylthiazol-5(2H)-ylidene]ethyl phosphate + 2 H2O + H(+). Its pathway is cofactor biosynthesis; thiamine diphosphate biosynthesis. In terms of biological role, catalyzes the rearrangement of 1-deoxy-D-xylulose 5-phosphate (DXP) to produce the thiazole phosphate moiety of thiamine. Sulfur is provided by the thiocarboxylate moiety of the carrier protein ThiS. In vitro, sulfur can be provided by H(2)S. In Campylobacter jejuni subsp. jejuni serotype O:6 (strain 81116 / NCTC 11828), this protein is Thiazole synthase.